The primary structure comprises 439 residues: Xylose isomerase (439 aa).

Catalysis depends on residues histidine 101 and aspartate 104. Mg(2+) is bound by residues glutamate 232, glutamate 268, histidine 271, aspartate 296, aspartate 307, aspartate 309, and aspartate 339.

It belongs to the xylose isomerase family. As to quaternary structure, homotetramer. Mg(2+) serves as cofactor.

It is found in the cytoplasm. The enzyme catalyses alpha-D-xylose = alpha-D-xylulofuranose. This chain is Xylose isomerase, found in Haemophilus influenzae (strain PittEE).